A 276-amino-acid chain; its full sequence is NH(3)-dependent NAD(+) synthetase (276 aa).

Residue 43–50 (GISGGVDS) participates in ATP binding. Asp-49 serves as a coordination point for Mg(2+). Arg-146 contributes to the deamido-NAD(+) binding site. ATP is bound at residue Thr-166. Glu-171 provides a ligand contact to Mg(2+). Residues Lys-179 and Asp-186 each coordinate deamido-NAD(+). ATP is bound by residues Lys-195 and Thr-217. 266–267 (HK) lines the deamido-NAD(+) pocket.

Belongs to the NAD synthetase family. As to quaternary structure, homodimer.

It carries out the reaction deamido-NAD(+) + NH4(+) + ATP = AMP + diphosphate + NAD(+) + H(+). The protein operates within cofactor biosynthesis; NAD(+) biosynthesis; NAD(+) from deamido-NAD(+) (ammonia route): step 1/1. In terms of biological role, catalyzes the ATP-dependent amidation of deamido-NAD to form NAD. Uses ammonia as a nitrogen source. The sequence is that of NH(3)-dependent NAD(+) synthetase from Shewanella putrefaciens (strain CN-32 / ATCC BAA-453).